The sequence spans 156 residues: ATP synthase subunit b (156 aa).

Residues 7 to 27 (LFVQAIVFLILVWFTMQFVWP) traverse the membrane as a helical segment.

Belongs to the ATPase B chain family. As to quaternary structure, F-type ATPases have 2 components, F(1) - the catalytic core - and F(0) - the membrane proton channel. F(1) has five subunits: alpha(3), beta(3), gamma(1), delta(1), epsilon(1). F(0) has three main subunits: a(1), b(2) and c(10-14). The alpha and beta chains form an alternating ring which encloses part of the gamma chain. F(1) is attached to F(0) by a central stalk formed by the gamma and epsilon chains, while a peripheral stalk is formed by the delta and b chains.

The protein localises to the cell inner membrane. In terms of biological role, f(1)F(0) ATP synthase produces ATP from ADP in the presence of a proton or sodium gradient. F-type ATPases consist of two structural domains, F(1) containing the extramembraneous catalytic core and F(0) containing the membrane proton channel, linked together by a central stalk and a peripheral stalk. During catalysis, ATP synthesis in the catalytic domain of F(1) is coupled via a rotary mechanism of the central stalk subunits to proton translocation. Functionally, component of the F(0) channel, it forms part of the peripheral stalk, linking F(1) to F(0). The sequence is that of ATP synthase subunit b from Verminephrobacter eiseniae (strain EF01-2).